We begin with the raw amino-acid sequence, 284 residues long: P2R1A-PPP2R2A-interacting phosphatase regulator 1 (284 aa).

The interval 1-65 (MAQEKMELDL…RRNSTTFPSR (65 aa)) is disordered. The segment covering 20–29 (EGGGPGGGGL) has biased composition (gly residues). Ser32 is modified (phosphoserine). A Phosphoserine; by CHEK1 modification is found at Ser34. Phosphoserine is present on residues Ser42, Ser45, Ser59, and Ser73. A Glycyl lysine isopeptide (Lys-Gly) (interchain with G-Cter in SUMO1) cross-link involves residue Lys86. Residues Ser140 and Ser144 each carry the phosphoserine modification. Phosphothreonine is present on Thr146. Residues 164 to 185 (SNGLPPSPIPSPTTRFTTRRSQ) form a disordered region. Low complexity predominate over residues 175–185 (PTTRFTTRRSQ). Phosphoserine occurs at positions 184 and 186. Positions 233-284 (GVCVSSDTLDGNSSSAGSSCNSPAKVSTTTDSPVSPAQAASPFIPVDELSSK) are disordered. The span at 243–254 (GNSSSAGSSCNS) shows a compositional bias: low complexity. The span at 256-267 (AKVSTTTDSPVS) shows a compositional bias: polar residues. Residues Ser264, Ser267, and Ser273 each carry the phosphoserine modification.

This sequence belongs to the FAM122 family. In terms of assembly, interacts with PPP2CA and PPP2R1A. Interacts (via its N-terminus) with PPP2R2A; the interaction is direct and this interaction inhibits PP2A activity. The CHEK1-mediated Ser-34 phosphorylated form interacts with 14-3-3 proteins. CHEK1-mediated phosphorylation at Ser-34 negatively regulates its ability to inhibit serine/threonine-protein phosphatase 2A (PP2A) activity. Phosphorylation leads to its release from the PP2A complex and its sequestration by 14-3-3 proteins in the cytoplasm resulting in its inability to translocate to the nucleus, where it otherwise inhibits PP2A.

Its subcellular location is the nucleus. It localises to the cytoplasm. In terms of biological role, acts as an inhibitor of serine/threonine-protein phosphatase 2A (PP2A) activity. Inhibits PP2A activity by blocking the substrate binding site on PPP2R2A and the active site of PPP2CA. Potentiates ubiquitin-mediated proteasomal degradation of serine/threonine-protein phosphatase 2A catalytic subunit alpha (PPP2CA). Inhibits PP2A-mediated dephosphorylation of WEE1, promoting ubiquitin-mediated proteolysis of WEE1, thereby releasing G2/M checkpoint. The sequence is that of P2R1A-PPP2R2A-interacting phosphatase regulator 1 from Mus musculus (Mouse).